The following is a 605-amino-acid chain: Ankyrin repeat domain-containing protein 13D (605 aa).

UIM domains follow at residues 482-501 (EDDDLLQFAIQQSLLEAGTE) and 528-547 (EEQLQLEQALQESLQLSTES). A compositionally biased stretch (low complexity) spans 538 to 554 (QESLQLSTESRGPESPQ). The segment at 538 to 605 (QESLQLSTES…RILQLSLTEH (68 aa)) is disordered. Ser552 is modified (phosphoserine). Residue Thr556 is modified to Phosphothreonine. Residues 564 to 575 (SFEEQLRLALEL) show a composition bias toward low complexity. UIM domains lie at 564-583 (SFEEQLRLALELSSREQEEL) and 589-605 (QEEDDLQRILQLSLTEH). Residues 576–589 (SSREQEELERRGQQ) are compositionally biased toward basic and acidic residues.

Interacts with EGFR (ubiquitinated); the interaction is direct and may regulate EGFR internalization.

The protein localises to the cell membrane. The protein resides in the late endosome. In terms of biological role, ubiquitin-binding protein that specifically recognizes and binds 'Lys-63'-linked ubiquitin. Does not bind 'Lys-48'-linked ubiquitin. Positively regulates the internalization of ligand-activated EGFR by binding to the Ub moiety of ubiquitinated EGFR at the cell membrane. In Mus musculus (Mouse), this protein is Ankyrin repeat domain-containing protein 13D (Ankrd13d).